Here is a 411-residue protein sequence, read N- to C-terminus: cAMP-dependent protein kinase regulatory subunit (411 aa).

The disordered stretch occupies residues 1–144; the sequence is MAESAFPSAQ…SWTPPYHEKT (144 aa). A dimerization and phosphorylation region spans residues 23 to 159; it reads AAFQKISEED…RLKTAVSSNF (137 aa). Residues 46-58 show a composition bias toward low complexity; sequence SANAAAASSSTGS. The span at 85 to 96 shows a compositional bias: acidic residues; that stretch reads EEDEEGADEFPP. The span at 119–136 shows a compositional bias: polar residues; sequence TSVSAESLNPTSAGSDSW. Serine 120 carries the post-translational modification Phosphoserine. 3',5'-cyclic AMP contacts are provided by residues 160–289, glutamate 238, arginine 247, 292–411, glutamate 359, and arginine 368; these read LFSH…FLEE and LLSS…PVPA.

It belongs to the cAMP-dependent kinase regulatory chain family. In terms of assembly, tetramer, composed of 2 regulatory (R) and 2 catalytic (C) subunits. In the presence of cAMP it dissociates into 2 active monomeric C subunits and an R dimer.

The chain is cAMP-dependent protein kinase regulatory subunit (pkaR) from Aspergillus niger.